Consider the following 807-residue polypeptide: Serine/threonine-protein kinase AfsK (807 aa).

In terms of domain architecture, Protein kinase spans 16-272; the sequence is FEVLGRLGAG…QAQLAPHLFA (257 aa). ATP-binding positions include 22–30 and Lys44; that span reads LGAGGMGLV. Ser71 carries the post-translational modification Phosphoserine; by autocatalysis. The Proton acceptor role is filled by Asp138. The residue at position 168 (Thr168) is a Phosphothreonine; by autocatalysis. 2 disordered regions span residues 292–328 and 353–429; these read MIERRRGGRRTARRPPRPRPRRLRAAPQGPGAGHRLA and AGPS…PSPA. Basic residues predominate over residues 297–315; sequence RGGRRTARRPPRPRPRRLR. The span at 353–363 shows a compositional bias: low complexity; it reads AGPSAAPDGGP.

Belongs to the protein kinase superfamily. Ser/Thr protein kinase family. As to quaternary structure, interacts (via the N-terminal kinase domain) with KbpA; the interaction prevents autophosphorylation of AfsK. Autophosphorylated mainly on threonine residues. Some phosphorylation on serine residues. Autophosphorylation on Thr-168 is the major site enhancing kinase activity towards AfsR, and is regulated though interaction with KbpA.

It carries out the reaction L-seryl-[protein] + ATP = O-phospho-L-seryl-[protein] + ADP + H(+). The enzyme catalyses L-threonyl-[protein] + ATP = O-phospho-L-threonyl-[protein] + ADP + H(+). Functionally, component of the AfsK/AfsR system involved in the response of aerial mycelium formation to glucose. In Streptomyces griseus, this protein is Serine/threonine-protein kinase AfsK (afsK).